A 127-amino-acid chain; its full sequence is Protein ApaG (127 aa).

Positions 3–127 (KTSIPDFQIT…FYLIAPLALH (125 aa)) constitute an ApaG domain.

This Bdellovibrio bacteriovorus (strain ATCC 15356 / DSM 50701 / NCIMB 9529 / HD100) protein is Protein ApaG.